The primary structure comprises 510 residues: NAD(P)H-quinone oxidoreductase subunit 2 B, chloroplastic (510 aa).

Helical transmembrane passes span 26–46 (LFDG…ILLL), 57–77 (IPWF…ALLF), 99–119 (IFQF…VEYI), 124–144 (MAIT…MFLC), 149–169 (LITI…LSGY), 183–203 (YLLM…WLYG), 227–247 (PGIS…LSPA), 295–315 (WHPL…LIAI), 323–342 (MLAY…IIVG), 354–374 (YMLF…LFGL), 395–415 (ALSL…AGFF), 418–438 (LHLF…IGLF), and 484–504 (MIVC…IIAI).

This sequence belongs to the complex I subunit 2 family. In terms of assembly, NDH is composed of at least 16 different subunits, 5 of which are encoded in the nucleus.

It localises to the plastid. Its subcellular location is the chloroplast thylakoid membrane. It catalyses the reaction a plastoquinone + NADH + (n+1) H(+)(in) = a plastoquinol + NAD(+) + n H(+)(out). It carries out the reaction a plastoquinone + NADPH + (n+1) H(+)(in) = a plastoquinol + NADP(+) + n H(+)(out). Functionally, NDH shuttles electrons from NAD(P)H:plastoquinone, via FMN and iron-sulfur (Fe-S) centers, to quinones in the photosynthetic chain and possibly in a chloroplast respiratory chain. The immediate electron acceptor for the enzyme in this species is believed to be plastoquinone. Couples the redox reaction to proton translocation, and thus conserves the redox energy in a proton gradient. The polypeptide is NAD(P)H-quinone oxidoreductase subunit 2 B, chloroplastic (Oenothera argillicola (Appalachian evening primrose)).